The primary structure comprises 513 residues: Cytochrome P450 4d10 (513 aa).

Positions 317 and 457 each coordinate heme.

Belongs to the cytochrome P450 family. The cofactor is heme.

Its subcellular location is the endoplasmic reticulum membrane. It localises to the microsome membrane. May play an important role in the maintenance of specific insect-host plant relationships. May be involved in xenobiotic metabolism. This is Cytochrome P450 4d10 (Cyp4d10) from Drosophila mettleri (Fruit fly).